We begin with the raw amino-acid sequence, 201 residues long: uncharacterized protein (201 aa).

This is an uncharacterized protein from Saccharomyces cerevisiae (strain ATCC 204508 / S288c) (Baker's yeast).